Reading from the N-terminus, the 328-residue chain is Malate dehydrogenase (328 aa).

13 to 19 (GGTGQIA) contributes to the NAD(+) binding site. Substrate-binding residues include arginine 94 and arginine 100. NAD(+) is bound by residues asparagine 107, glutamine 114, and 131–133 (VGN). 2 residues coordinate substrate: asparagine 133 and arginine 164. Residue histidine 189 is the Proton acceptor of the active site.

The protein belongs to the LDH/MDH superfamily. MDH type 2 family.

It carries out the reaction (S)-malate + NAD(+) = oxaloacetate + NADH + H(+). In terms of biological role, catalyzes the reversible oxidation of malate to oxaloacetate. This is Malate dehydrogenase from Chlamydia felis (strain Fe/C-56) (Chlamydophila felis).